A 159-amino-acid chain; its full sequence is Odorant-binding protein (159 aa).

The protein belongs to the calycin superfamily. Lipocalin family. In terms of assembly, homodimer.

It is found in the secreted. Its function is as follows. This protein binds a wide variety of chemical odorants. The polypeptide is Odorant-binding protein (Bos taurus (Bovine)).